A 166-amino-acid polypeptide reads, in one-letter code: Ubiquitin-fold modifier-conjugating enzyme 1 (166 aa).

Residue cysteine 116 is the Glycyl thioester intermediate of the active site.

It belongs to the ubiquitin-conjugating enzyme family. UFC1 subfamily. As to quaternary structure, interacts with UBA5 (via C-terminus). Interacts with UFL1. Interacts with UFM1.

E2-like enzyme which specifically catalyzes the second step in ufmylation. Accepts the ubiquitin-like modifier UFM1 from the E1 enzyme UBA5 and forms an intermediate with UFM1 via a thioester linkage. Ufmylation is involved in various processes, such as ribosome recycling, response to DNA damage, interferon response or reticulophagy (also called ER-phagy). The chain is Ubiquitin-fold modifier-conjugating enzyme 1 (ufc1) from Danio rerio (Zebrafish).